Consider the following 172-residue polypeptide: Nicotinamide-nucleotide adenylyltransferase (172 aa).

The protein belongs to the archaeal NMN adenylyltransferase family.

It localises to the cytoplasm. The catalysed reaction is beta-nicotinamide D-ribonucleotide + ATP + H(+) = diphosphate + NAD(+). The protein operates within cofactor biosynthesis; NAD(+) biosynthesis; NAD(+) from nicotinamide D-ribonucleotide: step 1/1. In Aeropyrum pernix (strain ATCC 700893 / DSM 11879 / JCM 9820 / NBRC 100138 / K1), this protein is Nicotinamide-nucleotide adenylyltransferase.